The chain runs to 153 residues: 6,7-dimethyl-8-ribityllumazine synthase (153 aa).

Residues F21, 55 to 57 (AFE), and 79 to 81 (TVI) each bind 5-amino-6-(D-ribitylamino)uracil. 84–85 (AT) contacts (2S)-2-hydroxy-3-oxobutyl phosphate. H87 (proton donor) is an active-site residue. Residue F112 participates in 5-amino-6-(D-ribitylamino)uracil binding. Position 126 (R126) interacts with (2S)-2-hydroxy-3-oxobutyl phosphate.

The protein belongs to the DMRL synthase family. As to quaternary structure, forms an icosahedral capsid composed of 60 subunits, arranged as a dodecamer of pentamers.

It carries out the reaction (2S)-2-hydroxy-3-oxobutyl phosphate + 5-amino-6-(D-ribitylamino)uracil = 6,7-dimethyl-8-(1-D-ribityl)lumazine + phosphate + 2 H2O + H(+). Its pathway is cofactor biosynthesis; riboflavin biosynthesis; riboflavin from 2-hydroxy-3-oxobutyl phosphate and 5-amino-6-(D-ribitylamino)uracil: step 1/2. Its function is as follows. Catalyzes the formation of 6,7-dimethyl-8-ribityllumazine by condensation of 5-amino-6-(D-ribitylamino)uracil with 3,4-dihydroxy-2-butanone 4-phosphate. This is the penultimate step in the biosynthesis of riboflavin. In Bacillus anthracis (strain A0248), this protein is 6,7-dimethyl-8-ribityllumazine synthase.